The primary structure comprises 1142 residues: Melanoma-associated antigen C1 (1142 aa).

Residues 1–132 (MGDKDMPTAG…DVQSPLQNPA (132 aa)) form a disordered region. Low complexity predominate over residues 13–42 (SLLQSSSESPQSCPEGEDSQSPLQIPQSSP). At Ser63 the chain carries Phosphoserine. The segment covering 76–87 (SQSPLQIPQSSP) has biased composition (low complexity). Over residues 92-103 (TQSPLQNSQSSP) the composition is skewed to polar residues. Residues Ser207 and Ser382 each carry the phosphoserine modification. Disordered stretches follow at residues 502–778 (TQST…LQRP) and 791–893 (LQSS…SLTD). Polar residues predominate over residues 614–626 (SPLQGEEFQSSLQ). The segment covering 627–659 (SPVSICSSSTPSSLPQSFPESSQSPPEGPVQSP) has biased composition (low complexity). Over residues 671-680 (HSQSPLQSPE) the composition is skewed to polar residues. 2 stretches are compositionally biased toward low complexity: residues 741–762 (QSPVSICSSSTSLSLPQSFPES) and 807–889 (QSPL…LESD). The region spanning 908 to 1106 (LDEKVDELAR…ITFPSSYKDA (199 aa)) is the MAGE domain. Residue Ser1063 is modified to Phosphoserine. Positions 1118-1142 (IDTTDDSTATESASSSVMSPSFSSE) are disordered. A compositionally biased stretch (low complexity) spans 1123 to 1142 (DSTATESASSSVMSPSFSSE).

In terms of tissue distribution, expressed in testis and in tumors of a wide variety of histologic types.

The protein localises to the cytoplasm. This Homo sapiens (Human) protein is Melanoma-associated antigen C1 (MAGEC1).